The primary structure comprises 343 residues: Aspartate-semialdehyde dehydrogenase (343 aa).

Threonine 11–valine 14 provides a ligand contact to NADP(+). Residue arginine 109 participates in phosphate binding. The active-site Acyl-thioester intermediate is cysteine 148. Glutamine 174 provides a ligand contact to substrate. Serine 177–glycine 178 is a binding site for NADP(+). Glutamate 200 contributes to the substrate binding site. Residue lysine 203 participates in phosphate binding. Arginine 233 serves as a coordination point for substrate. Histidine 240 functions as the Proton acceptor in the catalytic mechanism. Asparagine 321–threonine 322 provides a ligand contact to NADP(+).

The protein belongs to the aspartate-semialdehyde dehydrogenase family. In terms of assembly, homodimer.

The enzyme catalyses L-aspartate 4-semialdehyde + phosphate + NADP(+) = 4-phospho-L-aspartate + NADPH + H(+). Its pathway is amino-acid biosynthesis; L-lysine biosynthesis via DAP pathway; (S)-tetrahydrodipicolinate from L-aspartate: step 2/4. It functions in the pathway amino-acid biosynthesis; L-methionine biosynthesis via de novo pathway; L-homoserine from L-aspartate: step 2/3. It participates in amino-acid biosynthesis; L-threonine biosynthesis; L-threonine from L-aspartate: step 2/5. Its function is as follows. Catalyzes the NADPH-dependent formation of L-aspartate-semialdehyde (L-ASA) by the reductive dephosphorylation of L-aspartyl-4-phosphate. The polypeptide is Aspartate-semialdehyde dehydrogenase (Archaeoglobus fulgidus (strain ATCC 49558 / DSM 4304 / JCM 9628 / NBRC 100126 / VC-16)).